The primary structure comprises 252 residues: MSSSGLQLHIAGKRFGTRQVLRDIDLQLAPGEIVSLIGASGCGKSTLLRILAGLERDYAGEVALDGARVRGVDRQIGFIFQEPRLLPWLDVAANVAFADEADLSPAAARQSARVQQLLAQVGLLDYATALPKQLSGGQAQRVALARGLYRQPRVLLLDEPFSAVDAFTRIKLQDLLLRLAGEHGFSVLLVTHDIDEAVYLSDRVIVIGGQPGTIAHAQRLELPRPRDRQAHEAALRQARQDLLAALHSLHVF.

In terms of domain architecture, ABC transporter spans 6-234 (LQLHIAGKRF…PRDRQAHEAA (229 aa)). 38-45 (GASGCGKS) lines the ATP pocket.

Belongs to the ABC transporter superfamily. Aliphatic sulfonates importer (TC 3.A.1.17.2) family. The complex is composed of two ATP-binding proteins (SsuB), two transmembrane proteins (SsuC) and a solute-binding protein (SsuA).

The protein localises to the cell inner membrane. The catalysed reaction is ATP + H2O + aliphatic sulfonate-[sulfonate-binding protein]Side 1 = ADP + phosphate + aliphatic sulfonateSide 2 + [sulfonate-binding protein]Side 1.. Part of the ABC transporter complex SsuABC involved in aliphatic sulfonates import. Responsible for energy coupling to the transport system. In Xanthomonas axonopodis pv. citri (strain 306), this protein is Aliphatic sulfonates import ATP-binding protein SsuB 1.